An 865-amino-acid chain; its full sequence is Serine/threonine-protein kinase greatwall (865 aa).

Met-1 carries the N-acetylmethionine modification. The Protein kinase domain maps to 34 to 821 (FTIVKPISRG…MRELKQHPLF (788 aa)). ATP contacts are provided by residues 40–48 (ISRGAFGKV) and Lys-61. Residue Asp-155 is the Proton acceptor of the active site. Phosphothreonine occurs at positions 206 and 221. Residues Ser-362 and Ser-442 each carry the phosphoserine modification. Position 508 is a phosphothreonine (Thr-508). A phosphoserine mark is found at Ser-545, Ser-619, Ser-644, and Ser-655. At Thr-708 the chain carries Phosphothreonine. Position 711 is a phosphoserine (Ser-711). Residue Thr-727 is modified to Phosphothreonine; by CDK1. Residues 822–865 (SEVDWENLQHQTMPFVPQPDDETDTSYFEARNNAQHLTISGFSL) form the AGC-kinase C-terminal domain. Residues Ser-861 and Ser-864 each carry the phosphoserine modification.

Belongs to the protein kinase superfamily. AGC Ser/Thr protein kinase family. In terms of processing, phosphorylation at Thr-727 by CDK1 during M phase activates its kinase activity. Maximum phosphorylation occurs in prometaphase.

The protein resides in the cytoplasm. Its subcellular location is the cytoskeleton. It localises to the microtubule organizing center. It is found in the centrosome. The protein localises to the nucleus. The enzyme catalyses L-seryl-[protein] + ATP = O-phospho-L-seryl-[protein] + ADP + H(+). It catalyses the reaction L-threonyl-[protein] + ATP = O-phospho-L-threonyl-[protein] + ADP + H(+). Serine/threonine kinase that plays a key role in M phase by acting as a regulator of mitosis entry and maintenance. Acts by promoting the inactivation of protein phosphatase 2A (PP2A) during M phase: does not directly inhibit PP2A but acts by mediating phosphorylation and subsequent activation of ARPP19 and ENSA at 'Ser-62' and 'Ser-67', respectively. ARPP19 and ENSA are phosphatase inhibitors that specifically inhibit the PPP2R2D (PR55-delta) subunit of PP2A. Inactivation of PP2A during M phase is essential to keep cyclin-B1-CDK1 activity high. Following DNA damage, it is also involved in checkpoint recovery by being inhibited. The polypeptide is Serine/threonine-protein kinase greatwall (Mastl) (Mus musculus (Mouse)).